The primary structure comprises 82 residues: U16-lycotoxin-Ls1b (82 aa).

A signal peptide spans 1–22 (MSPKVQALLLLVGLITFLEVHA). Positions 23-34 (EEELSETVESER) are excised as a propeptide. Cystine bridges form between cysteine 36-cysteine 51, cysteine 43-cysteine 56, cysteine 50-cysteine 67, and cysteine 58-cysteine 65.

Belongs to the neurotoxin 02 (plectoxin) family. 04 (U16-lycotoxin) subfamily. As to expression, expressed by the venom gland.

The protein localises to the secreted. This chain is U16-lycotoxin-Ls1b, found in Lycosa singoriensis (Wolf spider).